We begin with the raw amino-acid sequence, 129 residues long: Gem-associated protein 7 (129 aa).

Methionine 1 carries the post-translational modification N-acetylmethionine. In terms of domain architecture, SUZ-C spans 1–31 (MQSPLTIPVPVPVLRLPRGPDGFSRGFASDG). The 67-residue stretch at 63 to 129 (RYLRSLLAMV…SDIISYSFKL (67 aa)) folds into the Sm domain.

The protein belongs to the gemin-7 family. In terms of assembly, part of the core SMN complex that contains SMN1, GEMIN2/SIP1, DDX20/GEMIN3, GEMIN4, GEMIN5, GEMIN6, GEMIN7, GEMIN8 and STRAP/UNRIP. Part of the SMN-Sm complex that contains SMN1, GEMIN2/SIP1, DDX20/GEMIN3, GEMIN4, GEMIN5, GEMIN6, GEMIN7, GEMIN8, STRAP/UNRIP and the Sm proteins SNRPB, SNRPD1, SNRPD2, SNRPD3, SNRPE, SNRPF and SNRPG. Interacts with GEMIN6; the interaction is direct. Interacts with STRAP/UNRIP; the interaction is direct. Interacts with GEMIN8; the interaction is direct. Interacts with SNRPB, SNRPD2, SNRPD3 and SNRPE; the interaction is direct.

It is found in the nucleus. Its subcellular location is the nucleoplasm. The protein localises to the gem. It localises to the cytoplasm. Functionally, the SMN complex catalyzes the assembly of small nuclear ribonucleoproteins (snRNPs), the building blocks of the spliceosome, and thereby plays an important role in the splicing of cellular pre-mRNAs. Most spliceosomal snRNPs contain a common set of Sm proteins SNRPB, SNRPD1, SNRPD2, SNRPD3, SNRPE, SNRPF and SNRPG that assemble in a heptameric protein ring on the Sm site of the small nuclear RNA to form the core snRNP (Sm core). In the cytosol, the Sm proteins SNRPD1, SNRPD2, SNRPE, SNRPF and SNRPG are trapped in an inactive 6S pICln-Sm complex by the chaperone CLNS1A that controls the assembly of the core snRNP. To assemble core snRNPs, the SMN complex accepts the trapped 5Sm proteins from CLNS1A forming an intermediate. Binding of snRNA inside 5Sm triggers eviction of the SMN complex, thereby allowing binding of SNRPD3 and SNRPB to complete assembly of the core snRNP. The sequence is that of Gem-associated protein 7 (Gemin7) from Mus musculus (Mouse).